A 534-amino-acid chain; its full sequence is Arginine transporter 1 (534 aa).

The next 6 helical transmembrane spans lie at 35-55 (YVLL…YFGW), 99-119 (SLFT…GYLL), 126-146 (AVAL…AFSG), 154-174 (PAFV…LLIV), 182-202 (ALIM…PLVL), and 216-236 (VCIG…FFFI). N246 is a glycosylation site (N-linked (GlcNAc...) asparagine). Positions 261–302 (TAQSSPKAVDSPPCDEGASSRGRLAVSHNTERTAPDDEQEKD) are disordered. Over residues 289–302 (NTERTAPDDEQEKD) the composition is skewed to basic and acidic residues. Helical transmembrane passes span 329 to 349 (AFTF…WVMA), 365 to 385 (YTLE…GVVI), 388 to 408 (IGIM…YVCV), 419 to 439 (FSVI…YVFV), 451 to 471 (LIGV…VLYG), and 483 to 503 (RPVV…LLAM).

Belongs to the SLC43A transporter (TC 2.A.1.44) family.

It localises to the cell membrane. The catalysed reaction is L-arginine(in) = L-arginine(out). In terms of biological role, selective L-arginine transporter that is essential for parasite survival and virulence. Does not require other inorganic ions such as sodium, chloride, potassium or calcium. In Toxoplasma gondii (strain ATCC 50611 / Me49), this protein is Arginine transporter 1.